The sequence spans 77 residues: Exodeoxyribonuclease 7 small subunit (77 aa).

It belongs to the XseB family. Heterooligomer composed of large and small subunits.

Its subcellular location is the cytoplasm. The enzyme catalyses Exonucleolytic cleavage in either 5'- to 3'- or 3'- to 5'-direction to yield nucleoside 5'-phosphates.. Its function is as follows. Bidirectionally degrades single-stranded DNA into large acid-insoluble oligonucleotides, which are then degraded further into small acid-soluble oligonucleotides. This Carboxydothermus hydrogenoformans (strain ATCC BAA-161 / DSM 6008 / Z-2901) protein is Exodeoxyribonuclease 7 small subunit.